We begin with the raw amino-acid sequence, 179 residues long: Large ribosomal subunit protein uL5 (179 aa).

The protein belongs to the universal ribosomal protein uL5 family. As to quaternary structure, part of the 50S ribosomal subunit; part of the 5S rRNA/L5/L18/L25 subcomplex. Contacts the 5S rRNA and the P site tRNA. Forms a bridge to the 30S subunit in the 70S ribosome.

In terms of biological role, this is one of the proteins that bind and probably mediate the attachment of the 5S RNA into the large ribosomal subunit, where it forms part of the central protuberance. In the 70S ribosome it contacts protein S13 of the 30S subunit (bridge B1b), connecting the 2 subunits; this bridge is implicated in subunit movement. Contacts the P site tRNA; the 5S rRNA and some of its associated proteins might help stabilize positioning of ribosome-bound tRNAs. In Macrococcus caseolyticus (strain JCSC5402) (Macrococcoides caseolyticum), this protein is Large ribosomal subunit protein uL5.